The following is a 740-amino-acid chain: Ion-translocating oxidoreductase complex subunit C (740 aa).

2 consecutive 4Fe-4S ferredoxin-type domains span residues 369–397 (GEPQ…QQLY) and 407–436 (KATT…VQYF). 8 residues coordinate [4Fe-4S] cluster: C377, C380, C383, C387, C416, C419, C422, and C426. Disordered regions lie at residues 602-652 (KLEQ…DPRK), 664-685 (ARKL…PRKA), and 695-714 (KARK…QVDP). Residues 605 to 615 (QQQANAEPEQQ) show a composition bias toward low complexity.

This sequence belongs to the 4Fe4S bacterial-type ferredoxin family. RnfC subfamily. In terms of assembly, the complex is composed of six subunits: RsxA, RsxB, RsxC, RsxD, RsxE and RsxG. [4Fe-4S] cluster serves as cofactor.

The protein localises to the cell inner membrane. Part of a membrane-bound complex that couples electron transfer with translocation of ions across the membrane. Required to maintain the reduced state of SoxR. The protein is Ion-translocating oxidoreductase complex subunit C of Escherichia coli O157:H7.